Here is a 1180-residue protein sequence, read N- to C-terminus: Chitin synthase 6 (1180 aa).

2 consecutive transmembrane segments (helical) span residues 108–128 and 374–394; these read FTIC…IIAF and LLLA…IAAL. Asparagine 737 carries an N-linked (GlcNAc...) asparagine glycan. 3 helical membrane-spanning segments follow: residues 762–782, 795–815, and 822–842; these read FIVF…VYLV, IPYI…ILFL, and YIGW…FLPI. One can recognise a DEK-C domain in the interval 1118 to 1175; it reads DPTDEEIKSAVQTYLANQPSLMNVTKRSVREALVAAFPNAELSYKKSMINKAIDDTLS.

Belongs to the chitin synthase family. Class V subfamily.

Its subcellular location is the cell membrane. It localises to the cytoplasmic vesicle membrane. It catalyses the reaction [(1-&gt;4)-N-acetyl-beta-D-glucosaminyl](n) + UDP-N-acetyl-alpha-D-glucosamine = [(1-&gt;4)-N-acetyl-beta-D-glucosaminyl](n+1) + UDP + H(+). Functionally, polymerizes chitin, a structural polymer of the cell wall and septum, by transferring the sugar moiety of UDP-GlcNAc to the non-reducing end of the growing chitin polymer. Plays a crucial role during infection and allows the fungus to overcome the resistance of the plant that checks growth of the pathogen and eventually eliminates it. The protein is Chitin synthase 6 of Mycosarcoma maydis (Corn smut fungus).